The sequence spans 292 residues: NAC domain-containing protein 105 (292 aa).

One can recognise an NAC domain in the interval 12 to 162 (IPPGFRFHPT…GWVVCRAFKK (151 aa)). Residues 112 to 168 (IGMRKTLVFYRGRAPNGQKSDWIIHEYYSLESHQNSPPQEEGWVVCRAFKKRTTIPT) mediate DNA binding. The span at 237 to 259 (LPQLESPSLPSEITPHSTTFSEN) shows a compositional bias: polar residues. Residues 237-269 (LPQLESPSLPSEITPHSTTFSENSSRKDDMSSE) form a disordered region. A compositionally biased stretch (basic and acidic residues) spans 260–269 (SSRKDDMSSE).

It belongs to the plant vascular related NAC-domain protein family. As to quaternary structure, interacts with NAC030/VND7. In terms of tissue distribution, detected in root protoxylem and metaxylem poles and in vessels of protoxylems, outermost metaxylems, inner metaxylems, shoots and hypocotyls. Expressed in roots, hypocotyls, cotyledons and leaves. Present in developing xylems. Present in root developing xylems. Specifically expressed in vessels but not in interfascicular fibers in stems.

The protein localises to the nucleus. Functionally, transcription activator that binds to the secondary wall NAC binding element (SNBE), 5'-(T/A)NN(C/T)(T/C/G)TNNNNNNNA(A/C)GN(A/C/T)(A/T)-3', in the promoter of target genes. Involved in xylem formation by promoting the expression of secondary wall-associated transcription factors and of genes involved in secondary wall biosynthesis and programmed cell death, genes driven by the secondary wall NAC binding element (SNBE). Triggers thickening of secondary walls. This is NAC domain-containing protein 105 from Arabidopsis thaliana (Mouse-ear cress).